The sequence spans 23 residues: Acidic phospholipase A2 CTs-A1 (23 aa).

It depends on Ca(2+) as a cofactor. In terms of processing, contains 7 disulfide bonds. In terms of tissue distribution, expressed by the venom gland.

It localises to the secreted. It catalyses the reaction a 1,2-diacyl-sn-glycero-3-phosphocholine + H2O = a 1-acyl-sn-glycero-3-phosphocholine + a fatty acid + H(+). In terms of biological role, snake venom phospholipase A2 (PLA2) that shows a moderate inhibition of ADP-induced human platelet aggregation when tested on platelet rich plasma. Exhibits moderate hydrolytic activities and prefers the anionic micelles (dPPC with deoxycholate) to the zwitterionic micelles (dPPC with Triton X-100). PLA2 catalyzes the calcium-dependent hydrolysis of the 2-acyl groups in 3-sn-phosphoglycerides. The polypeptide is Acidic phospholipase A2 CTs-A1 (Trimeresurus stejnegeri (Chinese green tree viper)).